Consider the following 274-residue polypeptide: Nickel/cobalt efflux system RcnA (274 aa).

Residues 1-12 (MTEFTTLLQQGN) are Periplasmic-facing. Residues 13–33 (AWFFIPSAILLGALHGLEPGH) form a helical membrane-spanning segment. Over 34-56 (SKTMMAAFIIAIKGTIKQAVMLG) the chain is Cytoplasmic. A helical membrane pass occupies residues 57-77 (LAATISHTAVVWLIAFGGMVI). The Periplasmic segment spans residues 78–86 (SKRFTAQSA). Residues 87-107 (EPWLQLISAVIIIGTAFWMFW) traverse the membrane as a helical segment. Topologically, residues 108–174 (RTWRGERNWL…FDGREVTNWQ (67 aa)) are cytoplasmic. Positions 130 to 149 (HDHEDHHDHGHHHHHEHGEY) are disordered. The chain crosses the membrane as a helical span at residues 175–195 (ILLFGLTGGLIPCPAAITVLL). The Periplasmic segment spans residues 196 to 209 (ICIQLKALTLGATL). A helical transmembrane segment spans residues 210 to 230 (VVSFSIGLALTLVTVGVGAAI). The Cytoplasmic segment spans residues 231 to 251 (SVQQVAKRWSGFNTLAKRAPY). A helical transmembrane segment spans residues 252–272 (FSSLLIGLVGVYMGVHGFMGI). Over 273-274 (MR) the chain is Periplasmic.

This sequence belongs to the NiCoT transporter (TC 2.A.52) family. RcnA subfamily.

The protein resides in the cell inner membrane. In terms of biological role, efflux system for nickel and cobalt. In Shigella sonnei (strain Ss046), this protein is Nickel/cobalt efflux system RcnA (rcnA).